Consider the following 1118-residue polypeptide: MNSQQSTRTKQMLQQSSTHLLCGVVLLQLFAAQVDAQRSTSPWQTLSGDAPLVIARGGFSGLFPDSSLAAYQFAMVVSVADVVLWCDVQLTKDGHGICFPDLNLANASNSEEVYPNRQKSYPVNGVTTKGWFPIDFSLTELQKVLFSLIRGILSRSGKFDENGYSISTVQNVATQMKPALFWLNVQHDEFYEQHNLSMSSFLLSTSRTVSIDFISSPEVNFFRKIAGGFGNNGPSFVFQFMGKEDFEPTTNRTYGSILSNLSFVKTFASGILVPKSYILPLDDKQYLLPHTSLVQDAHKAGLKLYASGFANDVDIAYNYSWDPVSEYLSFVDNGNFSVDGMLSDFPLTASASVDCFSHIGRNATKQVDFLVISKNGASGEYPGCTKLAYEKAIKDGSDVIDCPVQMSSDGIPFCSSSIDLVNSTTVGQTHLRNRSIIVPEISSVAGIFTFSLTWHEIQSLTPAISNPFRENGMSRNPNERNSGNLISLYEFLNLAKNSTSLSGILISLENVVYLREKKGLDVVKVVLNRLTETGYIVGTLKVMIQSTTRLVLVDFKNQSTYKTVYKIKETIGNITDSAIEDIKKFANAVVINKASVFPNSDSFLTGQTTNVLERLQKFQLPVYVELFQNEFVSQPFDFFADETVEINAYIFGAGINGTITEFPYTAARYKRNRCLGREEVPPYMLPVNPGGVLTLISTSSLPPAQDPNPIFTHDDVTEPPLPPVIAKSPTSTLGTPSTIAKPLRNFLKVIRIVSWSVAGVVLFLVLLTLVFCFHRKRETRLRQQKLKALIPLEHYTYAQVKRITKSFAEVVGRGGFGIVYKGTLSDGRVVAVKVLKDTKGNGEDFINEVATMSRTSHLNIVSLLGFCSEGSKRAIIYEFLENGSLDKFILGKTSVNMDWTALYRIALGVAHGLEYLHHSCKTRIVHFDIKPQNVLLDDSFCPKVSDFGLAKLCEKKESILSMLDTRGTIGYIAPEMISRVYGNVSHKSDVYSYGMLVLEIIGARNKEKANQACASNTSSMYFPEWVYRDLESCKSGRHIEDGINSEEDELAKKMTLVGLWCIQPSPVDRPAMNRVVEMMEGSLEALEVPPRPVLQQIPISNLHESSILSEDVSVYTEG.

The N-terminal stretch at 1 to 35 (MNSQQSTRTKQMLQQSSTHLLCGVVLLQLFAAQVD) is a signal peptide. Residues 36-751 (AQRSTSPWQT…PLRNFLKVIR (716 aa)) are Extracellular-facing. One can recognise a GP-PDE 1 domain in the interval 51–353 (PLVIARGGFS…DFPLTASASV (303 aa)). Asn-106, Asn-195, Asn-251, Asn-260, Asn-318, Asn-335, Asn-362, Asn-422, Asn-433, Asn-497, Asn-557, Asn-573, and Asn-656 each carry an N-linked (GlcNAc...) asparagine glycan. Residues 369–670 (FLVISKNGAS…EFPYTAARYK (302 aa)) enclose the GP-PDE 2 domain. Residues 752 to 772 (IVSWSVAGVVLFLVLLTLVFC) traverse the membrane as a helical segment. Topologically, residues 773-1118 (FHRKRETRLR…SEDVSVYTEG (346 aa)) are cytoplasmic. The Protein kinase domain maps to 805 to 1094 (KSFAEVVGRG…ALEVPPRPVL (290 aa)). ATP contacts are provided by residues 811–819 (VGRGGFGIV) and Lys-833. Residue Asp-928 is the Proton acceptor of the active site.

In the N-terminal section; belongs to the glycerophosphoryl diester phosphodiesterase family. The protein in the C-terminal section; belongs to the protein kinase superfamily. Ser/Thr protein kinase family. Expressed in shoots, rosette and cauline leaves, stems, flowers and siliques.

The protein resides in the cell membrane. It carries out the reaction a sn-glycero-3-phosphodiester + H2O = an alcohol + sn-glycerol 3-phosphate + H(+). It catalyses the reaction L-seryl-[protein] + ATP = O-phospho-L-seryl-[protein] + ADP + H(+). The enzyme catalyses L-threonyl-[protein] + ATP = O-phospho-L-threonyl-[protein] + ADP + H(+). Atypical receptor-like kinase involved in disease resistance. The protein is Protein SUPPRESSOR OF NPR1-1 CONSTITUTIVE 4 of Arabidopsis thaliana (Mouse-ear cress).